Here is a 282-residue protein sequence, read N- to C-terminus: 4-hydroxy-3-methylbut-2-enyl diphosphate reductase (282 aa).

A [4Fe-4S] cluster-binding site is contributed by C14. (2E)-4-hydroxy-3-methylbut-2-enyl diphosphate-binding residues include H43 and H78. Residues H43 and H78 each coordinate dimethylallyl diphosphate. Isopentenyl diphosphate-binding residues include H43 and H78. C100 serves as a coordination point for [4Fe-4S] cluster. H128 serves as a coordination point for (2E)-4-hydroxy-3-methylbut-2-enyl diphosphate. H128 lines the dimethylallyl diphosphate pocket. H128 is an isopentenyl diphosphate binding site. The active-site Proton donor is E130. T164 is a (2E)-4-hydroxy-3-methylbut-2-enyl diphosphate binding site. Position 192 (C192) interacts with [4Fe-4S] cluster. The (2E)-4-hydroxy-3-methylbut-2-enyl diphosphate site is built by S220, S221, N222, and S266. S220, S221, N222, and S266 together coordinate dimethylallyl diphosphate. Residues S220, S221, N222, and S266 each contribute to the isopentenyl diphosphate site.

It belongs to the IspH family. The cofactor is [4Fe-4S] cluster.

It carries out the reaction isopentenyl diphosphate + 2 oxidized [2Fe-2S]-[ferredoxin] + H2O = (2E)-4-hydroxy-3-methylbut-2-enyl diphosphate + 2 reduced [2Fe-2S]-[ferredoxin] + 2 H(+). It catalyses the reaction dimethylallyl diphosphate + 2 oxidized [2Fe-2S]-[ferredoxin] + H2O = (2E)-4-hydroxy-3-methylbut-2-enyl diphosphate + 2 reduced [2Fe-2S]-[ferredoxin] + 2 H(+). It participates in isoprenoid biosynthesis; dimethylallyl diphosphate biosynthesis; dimethylallyl diphosphate from (2E)-4-hydroxy-3-methylbutenyl diphosphate: step 1/1. The protein operates within isoprenoid biosynthesis; isopentenyl diphosphate biosynthesis via DXP pathway; isopentenyl diphosphate from 1-deoxy-D-xylulose 5-phosphate: step 6/6. Its function is as follows. Catalyzes the conversion of 1-hydroxy-2-methyl-2-(E)-butenyl 4-diphosphate (HMBPP) into a mixture of isopentenyl diphosphate (IPP) and dimethylallyl diphosphate (DMAPP). Acts in the terminal step of the DOXP/MEP pathway for isoprenoid precursor biosynthesis. The chain is 4-hydroxy-3-methylbut-2-enyl diphosphate reductase from Clostridium perfringens (strain SM101 / Type A).